The following is a 576-amino-acid chain: Arginine--tRNA ligase (576 aa).

The 'HIGH' region signature appears at 122 to 132; it reads PNVAKQMHVGH.

This sequence belongs to the class-I aminoacyl-tRNA synthetase family. Monomer.

Its subcellular location is the cytoplasm. It catalyses the reaction tRNA(Arg) + L-arginine + ATP = L-arginyl-tRNA(Arg) + AMP + diphosphate. The chain is Arginine--tRNA ligase from Yersinia pseudotuberculosis serotype O:1b (strain IP 31758).